Here is a 598-residue protein sequence, read N- to C-terminus: Probable ATP-dependent RNA helicase DDX52 (598 aa).

The residue at position 15 (Lys15) is an N6-acetyllysine. Ser39 carries the post-translational modification Phosphoserine. Positions 166 to 194 (QLDQEYKINSRLLQNILDAGFQVPTPIQM) match the Q motif motif. The Helicase ATP-binding domain maps to 197 to 375 (IPVMLHGREL…KLNLDNVVSV (179 aa)). 210–217 (APTGSGKT) serves as a coordination point for ATP. Residues 319 to 322 (DESD) carry the DEAD box motif. Residues 386 to 547 (TVEQELLFVG…PVPEYIKGFQ (162 aa)) enclose the Helicase C-terminal domain.

It belongs to the DEAD box helicase family. DDX52/ROK1 subfamily.

The protein resides in the nucleus. It is found in the nucleolus. It catalyses the reaction ATP + H2O = ADP + phosphate + H(+). Its function is as follows. Required for efficient ribosome biogenesis. May control cell cycle progression by regulating translation of mRNAs that contain a terminal oligo pyrimidine (TOP) motif in their 5' UTRs, such as GTPBP4. The polypeptide is Probable ATP-dependent RNA helicase DDX52 (Ddx52) (Mus musculus (Mouse)).